The chain runs to 304 residues: MIYENLQNSRIEEKTQEPGKAPSQSFLWRILSWTHLLLFSLGLSLLLLVVVSVIGSQNSQLRRDLGTLRATLDNTTSKIKAEFQSLDSRADSFEKGISSLKVDVEDHRQELQAGRDLSQKVTSLESTVEKREQALKTDLSDLTDHVQQLRKDLKALTCQLANLKNNGSEVACCPLHWTEHEGSCYWFSESEKSWPEADKYCRLENSHLVVVNSLEEQNFLQNRLANVVSWIGLTDQNGPWRWVDGTDFEKGFKNWAPLQPDNWFGHGLGGGEDCAHITTGGPWNDDVCQRTFRWICEMKLAKES.

Over 1 to 35 (MIYENLQNSRIEEKTQEPGKAPSQSFLWRILSWTH) the chain is Cytoplasmic. Residues 36–56 (LLLFSLGLSLLLLVVVSVIGS) traverse the membrane as a helical; Signal-anchor for type II membrane protein segment. Topologically, residues 57 to 304 (QNSQLRRDLG…ICEMKLAKES (248 aa)) are extracellular. 2 N-linked (GlcNAc...) asparagine glycosylation sites follow: asparagine 74 and asparagine 166. The C-type lectin domain occupies 172-298 (CCPLHWTEHE…QRTFRWICEM (127 aa)). 3 disulfides stabilise this stretch: cysteine 173–cysteine 184, cysteine 201–cysteine 296, and cysteine 274–cysteine 288.

As to quaternary structure, homooligomer. Interacts with SIGLEC1, which may act as a counter-receptor for CLEC10A in lymph node. As to expression, detected in lymph node in the subcapsular sinus, interfollicular regions, T and B-cell boundary and in the areas surrounding high endothelial venules (at protein level). Expressed on the surface of activated macrophages. Expressed in heart, lung, testis, skeletal muscle, spleen, brain, kidney and thymus. Expressed in P388, RAW 264.7 and M1 cell lines.

It is found in the membrane. In terms of biological role, recognizes terminal galactose and N-acetylgalactosamine units. May participate in the interaction between tumoricidal macrophages and tumor cells. Plays a role in the recruitment of inflammatory monocytes to adipose tissue in diet-induced obesity. The protein is C-type lectin domain family 10 member A (Clec10a) of Mus musculus (Mouse).